Consider the following 225-residue polypeptide: tRNA 2'-phosphotransferase 1 (225 aa).

The interval 1-21 is disordered; it reads MDCETRGRGRRGRGNRNEESR.

This sequence belongs to the KptA/TPT1 family.

The catalysed reaction is 2'-phospho-[ligated tRNA] + NAD(+) = mature tRNA + ADP-alpha-D-ribose 1'',2''-cyclic phosphate + nicotinamide. Functionally, catalyzes the last step of tRNA splicing, the transfer of the splice junction 2'-phosphate from ligated tRNA to NAD to produce ADP-ribose 1''-2'' cyclic phosphate. This is tRNA 2'-phosphotransferase 1 (trpt1) from Danio rerio (Zebrafish).